We begin with the raw amino-acid sequence, 357 residues long: Glucose-6-phosphatase catalytic subunit 1 (357 aa).

Residues 1-28 (MEKGMDVLHDFGIQSTHYLQVNYQDSQD) are Lumenal-facing. Residues 29-49 (WFILVSVIADLRNAFYVLFPI) form a helical membrane-spanning segment. At 50 to 60 (WFHLREAVGIK) the chain is on the cytoplasmic side. A helical transmembrane segment spans residues 61-81 (LLWVAVIGDWLNLVFKWILFG). At 82 to 117 (QRPYWWVMDTDYYSNTSVPLIKQFPVTCETGPGSPS) the chain is on the lumenal side. Arginine 83 is a binding site for substrate. Asparagine 96 is a glycosylation site (N-linked (GlcNAc...) asparagine). The helical transmembrane segment at 118 to 138 (GHAMGTAGVYYVMVTSTLSIF) threads the bilayer. Histidine 119 functions as the Proton donor in the catalytic mechanism. At 139–147 (RGRKRPTYR) the chain is on the cytoplasmic side. Residues 148–168 (FRCLNILLWLGFWAVQLNVCL) traverse the membrane as a helical segment. The Lumenal portion of the chain corresponds to 169–170 (SR). Arginine 170 lines the substrate pocket. A helical transmembrane segment spans residues 171–191 (IYLAAHFPHQVVAGVLSGIAV). Histidine 176 (nucleophile) is an active-site residue. At 192–209 (AETFRHIQSIYNASLKKY) the chain is on the cytoplasmic side. The chain crosses the membrane as a helical span at residues 210–230 (FLITFFLFSFAIGFYLLLKGL). Residues 231 to 254 (GVDLLWTLEKARRWCERPEWVHID) lie on the Lumenal side of the membrane. A helical transmembrane segment spans residues 255-275 (TTPFASLLKNVGTLFGLGVTL). Residues 276 to 291 (NSSMYRESCKGKLSKW) are Cytoplasmic-facing. Residues 292-312 (FPFRLSCIVVSLILLHLFDSL) traverse the membrane as a helical segment. Residues 313–320 (KPPSQTEL) are Lumenal-facing. A helical membrane pass occupies residues 321–341 (IFYTLSFCKSAAVPLASVSLI). At 342–357 (PYCLARVFDQPDKKSL) the chain is on the cytoplasmic side. The short motif at 354 to 357 (KKSL) is the Prevents secretion from ER element.

It belongs to the glucose-6-phosphatase family.

The protein localises to the endoplasmic reticulum membrane. The enzyme catalyses D-glucose 6-phosphate + H2O = D-glucose + phosphate. It participates in carbohydrate biosynthesis; gluconeogenesis. Functionally, hydrolyzes glucose-6-phosphate to glucose in the endoplasmic reticulum. Forms with the glucose-6-phosphate transporter (SLC37A4/G6PT) the complex responsible for glucose production in the terminal step of glycogenolysis and gluconeogenesis. Hence, it is the key enzyme in homeostatic regulation of blood glucose levels. The polypeptide is Glucose-6-phosphatase catalytic subunit 1 (G6PC1) (Canis lupus familiaris (Dog)).